Here is a 507-residue protein sequence, read N- to C-terminus: Arabinose import ATP-binding protein AraG (507 aa).

2 consecutive ABC transporter domains span residues 14–249 (LRFN…MVGR) and 249–505 (RDIQ…LPRT). An ATP-binding site is contributed by 46–53 (GENGAGKS).

Belongs to the ABC transporter superfamily. Arabinose importer (TC 3.A.1.2.2) family. The complex is composed of two ATP-binding proteins (AraG), two transmembrane proteins (AraH) and a solute-binding protein (AraF).

The protein resides in the cell inner membrane. The enzyme catalyses L-arabinose(out) + ATP + H2O = L-arabinose(in) + ADP + phosphate + H(+). Functionally, part of the ABC transporter complex AraFGH involved in arabinose import. Responsible for energy coupling to the transport system. This Pseudomonas savastanoi pv. phaseolicola (strain 1448A / Race 6) (Pseudomonas syringae pv. phaseolicola (strain 1448A / Race 6)) protein is Arabinose import ATP-binding protein AraG.